Here is a 463-residue protein sequence, read N- to C-terminus: Chromosomal replication initiator protein DnaA (463 aa).

Residues 1-83 (MSLTLWQQCL…LRFEVGSKPV (83 aa)) form a domain I, interacts with DnaA modulators region. Residues 83–126 (VAQAISQPVMVSAHASAPGVVSRPAPTRPSWDNVPALAELSYRS) form a domain II region. A domain III, AAA+ region region spans residues 127–343 (NVNTKHNFDN…GALNRVIANA (217 aa)). Gly-171, Gly-173, Lys-174, and Thr-175 together coordinate ATP. The domain IV, binds dsDNA stretch occupies residues 344 to 463 (NFTGRAITID…FSNLIRTLSS (120 aa)).

This sequence belongs to the DnaA family. As to quaternary structure, oligomerizes as a right-handed, spiral filament on DNA at oriC.

It is found in the cytoplasm. Plays an essential role in the initiation and regulation of chromosomal replication. ATP-DnaA binds to the origin of replication (oriC) to initiate formation of the DNA replication initiation complex once per cell cycle. Binds the DnaA box (a 9 base pair repeat at the origin) and separates the double-stranded (ds)DNA. Forms a right-handed helical filament on oriC DNA; dsDNA binds to the exterior of the filament while single-stranded (ss)DNA is stabiized in the filament's interior. The ATP-DnaA-oriC complex binds and stabilizes one strand of the AT-rich DNA unwinding element (DUE), permitting loading of DNA polymerase. After initiation quickly degrades to an ADP-DnaA complex that is not apt for DNA replication. Binds acidic phospholipids. The sequence is that of Chromosomal replication initiator protein DnaA from Erwinia tasmaniensis (strain DSM 17950 / CFBP 7177 / CIP 109463 / NCPPB 4357 / Et1/99).